We begin with the raw amino-acid sequence, 139 residues long: Protein FAM216B (139 aa).

Belongs to the FAM216 family.

This Homo sapiens (Human) protein is Protein FAM216B (FAM216B).